Reading from the N-terminus, the 106-residue chain is Nucleoid-associated protein Nwi_0368 (106 aa).

Belongs to the YbaB/EbfC family. In terms of assembly, homodimer.

The protein localises to the cytoplasm. Its subcellular location is the nucleoid. Its function is as follows. Binds to DNA and alters its conformation. May be involved in regulation of gene expression, nucleoid organization and DNA protection. The chain is Nucleoid-associated protein Nwi_0368 from Nitrobacter winogradskyi (strain ATCC 25391 / DSM 10237 / CIP 104748 / NCIMB 11846 / Nb-255).